The following is a 101-amino-acid chain: Small ribosomal subunit protein uS14 (101 aa).

The protein belongs to the universal ribosomal protein uS14 family. As to quaternary structure, part of the 30S ribosomal subunit. Contacts proteins S3 and S10.

Binds 16S rRNA, required for the assembly of 30S particles and may also be responsible for determining the conformation of the 16S rRNA at the A site. This chain is Small ribosomal subunit protein uS14, found in Caulobacter vibrioides (strain ATCC 19089 / CIP 103742 / CB 15) (Caulobacter crescentus).